The chain runs to 962 residues: Leucine--tRNA ligase (962 aa).

The 'HIGH' region motif lies at 40 to 51 (PYPSGAGLHVGH). The 'KMSKS' region signature appears at 737 to 741 (KMSKS). Lysine 740 contacts ATP.

This sequence belongs to the class-I aminoacyl-tRNA synthetase family.

The protein resides in the cytoplasm. It carries out the reaction tRNA(Leu) + L-leucine + ATP = L-leucyl-tRNA(Leu) + AMP + diphosphate. This is Leucine--tRNA ligase from Flavobacterium psychrophilum (strain ATCC 49511 / DSM 21280 / CIP 103535 / JIP02/86).